Consider the following 857-residue polypeptide: Major vault protein (857 aa).

8 MVP repeats span residues 18 to 60, 62 to 122, 123 to 174, 175 to 227, 228 to 282, 284 to 332, 333 to 387, and 388 to 441; these read PYYY…ITIP, RHYC…KVVQ, ANAA…TIIR, PNQA…YVLT, EKNA…NTLT, RQYC…FILG, EDEG…IPLD, and ENEG…VAER. Positions 434-453 are disordered; the sequence is AKDPVAERSDRRGDRAAPRA. A compositionally biased stretch (basic and acidic residues) spans 437–453; that stretch reads PVAERSDRRGDRAAPRA. An IQ domain is found at 665–694; the sequence is ARHEAERLEQEARGRLERQKIMDEAEAEKS.

The vault ribonucleoprotein particle is a huge (400 A x 670 A) cage structure of 12.9 MDa. It consists of a dimer of half-vaults, with each half-vault comprising 39 identical major vault protein (MVP) chains, PARP4 and one or more vault RNAs (vRNAs). In terms of tissue distribution, expressed in embryos, tube feet and coelomocytes (at protein level). Not expressed in sperm cells (at protein level).

It is found in the cytoplasm. The protein resides in the nucleus. Functionally, required for normal vault structure. Vaults are multi-subunit structures that may act as scaffolds for proteins involved in signal transduction. Vaults may also play a role in nucleo-cytoplasmic transport. The polypeptide is Major vault protein (Strongylocentrotus purpuratus (Purple sea urchin)).